The primary structure comprises 361 residues: MATTYRIAVLAGDGIGPEITAVALDVLRAIAPRFGLDFDFVPALVGGCAIDAVGEPLPAATLATCRQSDAVLLAAIGGTQWDSLPRHLRPETGLLALRSGLGLFANLRPAKIFPQLLHASSLKPEVIAGVDLMVVRELTGGIYFGQPRGIFTTETGEQRGVNTMAYTATEIDRIGRVAFETARKRQGKLCSVDKANVLEVSQLWRDRLTALSAEYPDVELTHLYVDNAAMQLVRAPKQFDTIVTSNLFGDILSDIAAMLTGSIGMLPSASLGESGPALFEPVHGSAPDIAGQDKANPLAMVLSAAMMLRYGLNQPAAAQAIEEAITAVLDQGYRTGDLMSEGCTLVGCREMGNLLIKELSR.

78–91 (GTQWDSLPRHLRPE) provides a ligand contact to NAD(+). Substrate contacts are provided by Arg98, Arg108, Arg136, and Asp226. Asp226, Asp250, and Asp254 together coordinate Mg(2+). 284–296 (GSAPDIAGQDKAN) lines the NAD(+) pocket.

It belongs to the isocitrate and isopropylmalate dehydrogenases family. LeuB type 1 subfamily. In terms of assembly, homodimer. It depends on Mg(2+) as a cofactor. The cofactor is Mn(2+).

The protein resides in the cytoplasm. It catalyses the reaction (2R,3S)-3-isopropylmalate + NAD(+) = 4-methyl-2-oxopentanoate + CO2 + NADH. Its pathway is amino-acid biosynthesis; L-leucine biosynthesis; L-leucine from 3-methyl-2-oxobutanoate: step 3/4. Functionally, catalyzes the oxidation of 3-carboxy-2-hydroxy-4-methylpentanoate (3-isopropylmalate) to 3-carboxy-4-methyl-2-oxopentanoate. The product decarboxylates to 4-methyl-2 oxopentanoate. This Thermosynechococcus vestitus (strain NIES-2133 / IAM M-273 / BP-1) protein is 3-isopropylmalate dehydrogenase.